The chain runs to 169 residues: Probable glutathione peroxidase 2 (169 aa).

The active site involves C41.

Belongs to the glutathione peroxidase family. Interacts with DJ1A. Expressed in leaves, stems, flowers, green siliques and roots.

It is found in the cytoplasm. The protein localises to the cytosol. Its subcellular location is the nucleus. The catalysed reaction is 2 glutathione + H2O2 = glutathione disulfide + 2 H2O. Its function is as follows. May constitute a glutathione peroxidase-like protective system against oxidative stresses. In Arabidopsis thaliana (Mouse-ear cress), this protein is Probable glutathione peroxidase 2 (GPX2).